A 193-amino-acid chain; its full sequence is MSNPTLTFVTGNANKLREVQQIFSLTPNFPYELTNKDLDLPEIQGTTRDVAQAKCAAAAKALGGACITEDTALGFHALGGLPGPYIKDFMKTIGHDGLNKMLDGFEDRTASAICTFAYCAGPDEQVHLFEGRTEGVIVPPRGPTHFGWDPILEIKGTGLTYAEMDPKQKNTLSHRYKALTLLQDYLVGLSKQN.

Residue 10–15 (TGNANK) participates in ITP binding. Glu42 serves as a coordination point for Mg(2+). ITP contacts are provided by residues Lys54, 70-71 (DT), Lys87, 146-149 (FGWD), Lys169, and 174-175 (HR).

This sequence belongs to the HAM1 NTPase family. As to quaternary structure, homodimer. Mg(2+) serves as cofactor. Requires Mn(2+) as cofactor.

The protein localises to the cytoplasm. It is found in the nucleus. It catalyses the reaction ITP + H2O = IMP + diphosphate + H(+). It carries out the reaction dITP + H2O = dIMP + diphosphate + H(+). The catalysed reaction is XTP + H2O = XMP + diphosphate + H(+). Its function is as follows. Pyrophosphatase that hydrolyzes non-canonical purine nucleotides such as inosine triphosphate (ITP), deoxyinosine triphosphate (dITP) or xanthosine 5'-triphosphate (XTP) to their respective monophosphate derivatives. The enzyme does not distinguish between the deoxy- and ribose forms. Probably excludes non-canonical purines from RNA and DNA precursor pools, thus preventing their incorporation into RNA and DNA and avoiding chromosomal lesions. This chain is Inosine triphosphate pyrophosphatase, found in Mycosarcoma maydis (Corn smut fungus).